The following is a 1905-amino-acid chain: von Willebrand factor A domain-containing protein 8 (1905 aa).

The N-terminal 45 residues, 1–45 (MQSRLLLLGAPGGLGDVASRRVRLLLRQVLRGRPGGDQQRLEVRL), are a transit peptide targeting the mitochondrion. The interaction with PEX7 stretch occupies residues 1 to 260 (MQSRLLLLGA…PLDPPLRSRF (260 aa)). 446–453 (GGKGCGKT) contacts ATP. The span at 1541–1560 (ERDSNEDVSDPKHGKEDPDN) shows a compositional bias: basic and acidic residues. The interval 1541 to 1583 (ERDSNEDVSDPKHGKEDPDNMPHVGGNTWAGGTGGRDTAGLGG) is disordered. The span at 1568 to 1583 (TWAGGTGGRDTAGLGG) shows a compositional bias: gly residues. Residues 1714-1896 (RLRLVVDVSG…KKIPQILQQI (183 aa)) enclose the VWFA domain.

Monomer. Interacts with PEX7. Interacts with PEX5 in a PEX7-dependent manner. In terms of tissue distribution, isoform 1 is predominantly expressed in liver, kidney, pancreas, heart, and skeletal muscle (at protein level).

It is found in the mitochondrion. Its function is as follows. Exhibits ATPase activity in vitro. In Mus musculus (Mouse), this protein is von Willebrand factor A domain-containing protein 8 (Vwa8).